A 282-amino-acid chain; its full sequence is tRNA pseudouridine synthase A (282 aa).

The active-site Nucleophile is aspartate 61. Tyrosine 119 provides a ligand contact to substrate.

The protein belongs to the tRNA pseudouridine synthase TruA family. As to quaternary structure, homodimer.

The enzyme catalyses uridine(38/39/40) in tRNA = pseudouridine(38/39/40) in tRNA. Functionally, formation of pseudouridine at positions 38, 39 and 40 in the anticodon stem and loop of transfer RNAs. This chain is tRNA pseudouridine synthase A, found in Nostoc sp. (strain PCC 7120 / SAG 25.82 / UTEX 2576).